The chain runs to 289 residues: Glycerol facilitator-aquaporin gla (289 aa).

The next 2 membrane-spanning stretches (helical) occupy residues 10–30 (ITEFVGTALLIIMGNGAVANV) and 41–61 (SWMIIGWGYGLGVMLPAVAFG). Residues 68-70 (NPA) carry the NPA 1 motif. Transmembrane regions (helical) follow at residues 87–107 (AQYIIAQVLGAMFGQLLIVMV), 151–171 (FVGSFVLFFGAVAATNIFFGS), and 209–229 (MVAHLFLGFLVMGLVVALGGP). Residues 235-237 (NPA) carry the NPA 2 motif. A helical membrane pass occupies residues 264-284 (WYAWVPVLAPILASLAAVALF).

Belongs to the MIP/aquaporin (TC 1.A.8) family.

It is found in the cell membrane. Its function is as follows. Mixed channel protein that transports both water and glycerol. The protein is Glycerol facilitator-aquaporin gla (gla) of Lactococcus lactis subsp. lactis (strain IL1403) (Streptococcus lactis).